A 159-amino-acid chain; its full sequence is Olfactory receptor-like protein COR8 (159 aa).

Residues 1 to 16 (VAICNPLLYTISMPKS) are Cytoplasmic-facing. Residues 17–41 (LCMKLVAGSYLGGVLNSLTQTCCLL) form a helical membrane-spanning segment. The Extracellular portion of the chain corresponds to 42–82 (PLPFCGPNVINHYFCDTNPLLKLTCSDGRLNELLLVTFNGT). Asn80 carries N-linked (GlcNAc...) asparagine glycosylation. The chain crosses the membrane as a helical span at residues 83 to 103 (ISMTVLLIIVISYVYILVSIL). Over 104–116 (SIRSARGRHKAFS) the chain is Cytoplasmic. A helical transmembrane segment spans residues 117-137 (TCASHLLTVTLFYVPAGLSHM). Residues 138–148 (QPGSKYSLDME) lie on the Extracellular side of the membrane. A helical transmembrane segment spans residues 149–159 (KVTAVFYTLLV).

Belongs to the G-protein coupled receptor 1 family.

It localises to the cell membrane. In terms of biological role, odorant receptor. This is Olfactory receptor-like protein COR8 (COR8) from Gallus gallus (Chicken).